The primary structure comprises 246 residues: Large ribosomal subunit protein uL3 (246 aa).

Disordered regions lie at residues 140 to 162 (SHRS…NKKM) and 214 to 246 (ADVP…EENA). N5-methylglutamine is present on glutamine 151. Low complexity predominate over residues 234–246 (EAAPEAPASEENA).

Belongs to the universal ribosomal protein uL3 family. As to quaternary structure, part of the 50S ribosomal subunit. Forms a cluster with proteins L14 and L19. In terms of processing, methylated by PrmB.

Functionally, one of the primary rRNA binding proteins, it binds directly near the 3'-end of the 23S rRNA, where it nucleates assembly of the 50S subunit. In Methylorubrum extorquens (strain CM4 / NCIMB 13688) (Methylobacterium extorquens), this protein is Large ribosomal subunit protein uL3.